A 486-amino-acid polypeptide reads, in one-letter code: Membrane-bound lytic murein transglycosylase F (486 aa).

The signal sequence occupies residues 1-21 (MTRIKLNYFVIGVVALLLALA). Residues 22–268 (LWPNIPWRNG…RLEEKYLGHV (247 aa)) are non-LT domain. The tract at residues 269–486 (GSFDYVDTKT…VVGPGWSINN (218 aa)) is LT domain. Glu313 is a catalytic residue.

It in the N-terminal section; belongs to the bacterial solute-binding protein 3 family. The protein in the C-terminal section; belongs to the transglycosylase Slt family.

The protein localises to the cell outer membrane. The enzyme catalyses Exolytic cleavage of the (1-&gt;4)-beta-glycosidic linkage between N-acetylmuramic acid (MurNAc) and N-acetylglucosamine (GlcNAc) residues in peptidoglycan, from either the reducing or the non-reducing ends of the peptidoglycan chains, with concomitant formation of a 1,6-anhydrobond in the MurNAc residue.. Its function is as follows. Murein-degrading enzyme that degrades murein glycan strands and insoluble, high-molecular weight murein sacculi, with the concomitant formation of a 1,6-anhydromuramoyl product. Lytic transglycosylases (LTs) play an integral role in the metabolism of the peptidoglycan (PG) sacculus. Their lytic action creates space within the PG sacculus to allow for its expansion as well as for the insertion of various structures such as secretion systems and flagella. The sequence is that of Membrane-bound lytic murein transglycosylase F from Yersinia enterocolitica serotype O:8 / biotype 1B (strain NCTC 13174 / 8081).